The sequence spans 553 residues: Phenylalanine--tRNA ligase alpha subunit (553 aa).

The L-phenylalanine site is built by Thr400 and Phe479. Residue Glu481 participates in Mg(2+) binding.

The protein belongs to the class-II aminoacyl-tRNA synthetase family. Phe-tRNA synthetase alpha subunit type 2 subfamily. In terms of assembly, tetramer of two alpha and two beta subunits. Requires Mg(2+) as cofactor.

It localises to the cytoplasm. It catalyses the reaction tRNA(Phe) + L-phenylalanine + ATP = L-phenylalanyl-tRNA(Phe) + AMP + diphosphate + H(+). This is Phenylalanine--tRNA ligase alpha subunit from Treponema pallidum (strain Nichols).